The primary structure comprises 150 residues: Avidin-related protein 3 (150 aa).

Residues methionine 1–serine 24 form the signal peptide. Residues arginine 26–threonine 147 enclose the Avidin-like domain. Cysteine 28 and cysteine 105 are oxidised to a cystine. Residues asparagine 36, serine 40, tyrosine 57, threonine 59, and aspartate 63 each contribute to the biotin site. An N-linked (GlcNAc...) asparagine glycan is attached at asparagine 93. Positions 95, 99, and 140 each coordinate biotin. Asparagine 141 carries an N-linked (GlcNAc...) asparagine glycan.

It belongs to the avidin/streptavidin family. In terms of assembly, homotetramer. Post-translationally, glycosylated.

It is found in the secreted. In terms of biological role, forms a strong non-covalent specific complex with biotin. In Gallus gallus (Chicken), this protein is Avidin-related protein 3 (AVR3).